The chain runs to 397 residues: Succinate--CoA ligase [ADP-forming] subunit beta (397 aa).

The 236-residue stretch at 9-244 (KEIMKQYGIS…LTEEDPREVQ (236 aa)) folds into the ATP-grasp domain. ATP contacts are provided by residues lysine 46, 53-55 (GRG), glutamate 99, leucine 102, and glutamate 107. Mg(2+)-binding residues include asparagine 199 and aspartate 213. Substrate is bound by residues asparagine 264 and 321–323 (GIM).

This sequence belongs to the succinate/malate CoA ligase beta subunit family. As to quaternary structure, heterotetramer of two alpha and two beta subunits. The cofactor is Mg(2+).

It carries out the reaction succinate + ATP + CoA = succinyl-CoA + ADP + phosphate. The catalysed reaction is GTP + succinate + CoA = succinyl-CoA + GDP + phosphate. It functions in the pathway carbohydrate metabolism; tricarboxylic acid cycle; succinate from succinyl-CoA (ligase route): step 1/1. Functionally, succinyl-CoA synthetase functions in the citric acid cycle (TCA), coupling the hydrolysis of succinyl-CoA to the synthesis of either ATP or GTP and thus represents the only step of substrate-level phosphorylation in the TCA. The beta subunit provides nucleotide specificity of the enzyme and binds the substrate succinate, while the binding sites for coenzyme A and phosphate are found in the alpha subunit. The chain is Succinate--CoA ligase [ADP-forming] subunit beta from Alkaliphilus metalliredigens (strain QYMF).